Reading from the N-terminus, the 110-residue chain is MASIGQGLVLLLLLLLLTAQPGPLKAQHWSHGWYPGGKRSPDSPQDPQPAPRFPEGYWLGLAAGNPRQSTQSLPSKALAPPEDTVSEEAKTMAWWHLQKQRLIQTLLPRP.

An N-terminal signal peptide occupies residues 1-26; sequence MASIGQGLVLLLLLLLLTAQPGPLKA. The tract at residues 25–85 is disordered; that stretch reads KAQHWSHGWY…KALAPPEDTV (61 aa). Glycine 36 carries the post-translational modification Glycine amide.

This sequence belongs to the GnRH family. As to expression, midbrain.

It localises to the secreted. Functionally, stimulates the secretion of gonadotropins; it stimulates the secretion of both luteinizing and follicle-stimulating hormones. In Suncus murinus (Asian house shrew), this protein is Progonadoliberin-2 (GNRH2).